A 339-amino-acid chain; its full sequence is Polyhydroxybutyrate depolymerase (339 aa).

Residues 1–20 (MFDSVKIAWLVALGAAQVAA) form the signal peptide. Serine 39 is a catalytic residue. The cysteines at positions 70 and 79 are disulfide-linked. The active site involves aspartate 121. Asparagine 144 carries an N-linked (GlcNAc...) asparagine glycan. The active site involves histidine 155. 3 cysteine pairs are disulfide-bonded: cysteine 169–cysteine 180, cysteine 234–cysteine 241, and cysteine 250–cysteine 304. (3R)-hydroxybutanoate trimer is bound at residue tryptophan 307.

The protein belongs to the carbohydrate esterase 1 (CE1) family.

Its subcellular location is the secreted. The enzyme catalyses [(3R)-hydroxybutanoate](n) + H2O = [(3R)-hydroxybutanoate](n-1) + (R)-3-hydroxybutanoate + H(+). With respect to regulation, the enzyme is completely inhibited by dithiothreitol (DTT) and diisopropylfluorophosphate (DFP), and partially inhibited by HgCl(2) and by enzyme3-(p-nitrophenoxy)propane (EPNP). Activity is not affected by N-ethylmaleimide (NEM) or phenylmethylsulfonyl fluoride (PMSF). Esterase involved in the hydrolysis of polyhydroxybutyrate, a microbial polyester that can be produced from renewable resources. The sequence is that of Polyhydroxybutyrate depolymerase from Talaromyces funiculosus (Fruitlet core rot fungus).